Here is a 1381-residue protein sequence, read N- to C-terminus: Hepatocyte growth factor receptor (1381 aa).

A signal peptide spans 1–24 (MKAPAVLAPGILLLLFTLVQRSNG). The Extracellular portion of the chain corresponds to 25–932 (ECKEALTKSE…VIVQPDQNFT (908 aa)). Positions 27–515 (KEALTKSEMN…TGKKITKIPL (489 aa)) constitute a Sema domain. Asn45 carries N-linked (GlcNAc...) asparagine glycosylation. Cystine bridges form between Cys95–Cys101, Cys98–Cys160, Cys133–Cys141, and Cys172–Cys175. N-linked (GlcNAc...) asparagine glycosylation occurs at Asn106. An N-linked (GlcNAc...) asparagine glycan is attached at Asn149. The N-linked (GlcNAc...) asparagine glycan is linked to Asn202. 2 disulfides stabilise this stretch: Cys298/Cys363 and Cys385/Cys397. An N-linked (GlcNAc...) asparagine glycan is attached at Asn399. 4 cysteine pairs are disulfide-bonded: Cys520–Cys538, Cys526–Cys561, Cys529–Cys545, and Cys541–Cys551. 3 consecutive IPT/TIG domains span residues 563–655 (PTIY…FSYV), 657–739 (PIIT…FSYR), and 742–836 (PIVY…LIYV). Thr582 carries an O-linked (Man) threonine glycan. 2 N-linked (GlcNAc...) asparagine glycosylation sites follow: Asn607 and Asn635. Residues Thr676 and Thr761 are each glycosylated (O-linked (Man) threonine). 3 N-linked (GlcNAc...) asparagine glycosylation sites follow: Asn785, Asn879, and Asn930. Residues 933 to 955 (GLIAGVVSISIALLLLLGLFLWL) traverse the membrane as a helical segment. The Cytoplasmic segment spans residues 956–1381 (KKRKQIKDLG…QDNPDGEVDT (426 aa)). Ser966 is subject to Phosphoserine. Position 977 is a phosphothreonine (Thr977). Residues Ser990, Ser997, and Ser1000 each carry the phosphoserine modification. Tyr1003 is subject to Phosphotyrosine. Residues 1078–1345 (VHFNEVIGRG…RISAIFSTFI (268 aa)) form the Protein kinase domain. Residues 1084 to 1092 (IGRGHFGCV) and Lys1110 contribute to the ATP site. Asp1204 serves as the catalytic Proton acceptor. Residues 1212–1381 (LDEKFTVKVA…QDNPDGEVDT (170 aa)) are interaction with RANBP9. Tyr1230 is subject to Phosphotyrosine. A phosphotyrosine; by autocatalysis mark is found at Tyr1234 and Tyr1235. Thr1289 is modified (phosphothreonine). Residues 1320 to 1359 (WHPKAEMRPSFSELVSRISAIFSTFIGEHYVHVNATYVNV) form an interaction with MUC20 region. 2 positions are modified to phosphotyrosine; by autocatalysis: Tyr1349 and Tyr1356. The residue at position 1365 (Tyr1365) is a Phosphotyrosine.

It belongs to the protein kinase superfamily. Tyr protein kinase family. As to quaternary structure, heterodimer made of an alpha chain (50 kDa) and a beta chain (145 kDa) which are disulfide linked. Binds PLXNB1. Interacts when phosphorylated with downstream effectors including STAT3, PIK3R1, SRC, PCLG1, GRB2 and GAB1. Interacts with SPSB1, SPSB2 and SPSB4. Interacts with INPP5D/SHIP1. When phosphorylated at Tyr-1356, interacts with INPPL1/SHIP2. Interacts with RANBP9 and RANBP10, as well as SPSB1, SPSB2, SPSB3 and SPSB4. SPSB1 binding occurs in the presence and in the absence of HGF, however HGF treatment has a positive effect on this interaction. Interacts with MUC20; prevents interaction with GRB2 and suppresses hepatocyte growth factor-induced cell proliferation. Interacts with GRB10. Interacts with PTPN1 and PTPN2. Interacts with tensin TNS3. Interacts (when phosphorylated) with tensin TNS4 (via SH2 domain); the interaction increases MET protein stability by inhibiting MET endocytosis and subsequent lysosomal degradation. In terms of processing, autophosphorylated in response to ligand binding on Tyr-1234 and Tyr-1235 in the kinase domain leading to further phosphorylation of Tyr-1349 and Tyr-1356 in the C-terminal multifunctional docking site. Dephosphorylated by PTPRJ at Tyr-1349 and Tyr-1365. Dephosphorylated by PTPN1 and PTPN2. Post-translationally, ubiquitinated. Ubiquitination by CBL regulates the receptor stability and activity through proteasomal degradation. O-mannosylation of IPT/TIG domains by TMEM260 is required for protein maturation. O-mannosylated residues are composed of single mannose glycans that are not elongated or modified.

It is found in the membrane. The catalysed reaction is L-tyrosyl-[protein] + ATP = O-phospho-L-tyrosyl-[protein] + ADP + H(+). With respect to regulation, in its inactive state, the C-terminal tail interacts with the catalytic domain and inhibits the kinase activity. Upon ligand binding, the C-terminal tail is displaced and becomes phosphorylated, thus increasing the kinase activity. Functionally, receptor tyrosine kinase that transduces signals from the extracellular matrix into the cytoplasm by binding to hepatocyte growth factor/HGF ligand. Regulates many physiological processes including proliferation, scattering, morphogenesis and survival. Ligand binding at the cell surface induces autophosphorylation of MET on its intracellular domain that provides docking sites for downstream signaling molecules. Following activation by ligand, interacts with the PI3-kinase subunit PIK3R1, PLCG1, SRC, GRB2, STAT3 or the adapter GAB1. Recruitment of these downstream effectors by MET leads to the activation of several signaling cascades including the RAS-ERK, PI3 kinase-AKT, or PLCgamma-PKC. The RAS-ERK activation is associated with the morphogenetic effects while PI3K/AKT coordinates prosurvival effects. During embryonic development, MET signaling plays a role in gastrulation, development and migration of muscles and neuronal precursors, angiogenesis and kidney formation. In adults, participates in wound healing as well as organ regeneration and tissue remodeling. Also promotes differentiation and proliferation of hematopoietic cells. The sequence is that of Hepatocyte growth factor receptor (MET) from Aotus nancymaae (Ma's night monkey).